A 379-amino-acid polypeptide reads, in one-letter code: Zinc finger protein 883 (379 aa).

13 C2H2-type zinc fingers span residues 13 to 35, 41 to 63, 69 to 91, 97 to 119, 125 to 147, 153 to 175, 181 to 203, 209 to 231, 237 to 259, 265 to 287, 293 to 315, 321 to 343, and 349 to 371; these read YLCTECGKGYTCLASLTQHQKTH, YECKICGKSFTRNSNLVQHQRIH, YECNECGKAFSQSTNLIQHQRVH, YECNECEKTFSHRSSLRNHERIH, YPCNECGKAFSHISALTQHHRIH, YECTECGKTFSRSTHLIEHQGIH, YQCKQCRKVFCHSTSLIRHQRTH, YECNECGKAFSHTPAFIQHQRIH, YECNACGKAFNRSAHLTEHQRTH, YVCKECGKTFSRSTHLTEHLKIH, YQCNECQKLFCYRTSLIRHQRTH, YQCNECGKSFSLSSALTKHKRIH, and YQCTKCGDVFCHSTSLIRHQKTH.

The protein belongs to the krueppel C2H2-type zinc-finger protein family.

The protein resides in the nucleus. In terms of biological role, may be involved in transcriptional regulation. The protein is Zinc finger protein 883 (ZNF883) of Homo sapiens (Human).